A 781-amino-acid polypeptide reads, in one-letter code: Putative UPF0313 protein YPO0674/y3502/YP_2990 (781 aa).

Positions 368 to 646 (AYDMIRFSIN…KALLRYHDPA (279 aa)) constitute a Radical SAM core domain. C382, C386, and C389 together coordinate [4Fe-4S] cluster. The segment at 681 to 781 (REARRALRHH…AGSRGKNRQH (101 aa)) is disordered. Residues 696 to 708 (KHTSITRQRQPSN) show a composition bias toward polar residues. Residues 726 to 750 (TSSAHSTSANQSTSANQSTSAAHST) are compositionally biased toward low complexity.

The protein belongs to the UPF0313 family. The cofactor is [4Fe-4S] cluster.

This is Putative UPF0313 protein YPO0674/y3502/YP_2990 from Yersinia pestis.